Reading from the N-terminus, the 526-residue chain is MNVLKYTKHSPSAHAWKLIGTSPKHGIYLPLFSIHTKNSCGIGEFLDLIPLISWCQKQGFSVIQLLPLNDTGEDTSPYNSISSVALNPLFLSLSSLPNIDTIPEVAKKLQDMHELCSTPSVSYTQVKEKKWAFLREYYQKCCKSSLEGNSNFSEFLESERYWLYPYGTFRAIKHHMHGEPINNWPKSLTDQENFPDLTKKFHDEVLFFSYLQFLCYQQLCEVKAYADQHHVLLKGDLPILISKDSCDVWYFRDYFSSSRSVGAPPDLYNSEGQNWHLPIYNFSQLAKDDYIWWKERLRYAQNFYSVYRLDHIIGFFRLWIWDSSGRGRFIPDNPKDYIKQGTEILSTMLGASSMLPIGEDLGIIPQDVKTTLTHLGICGTRIPRWERNWESDSAFIPLKDYNPLSVTTLSTHDSDTFAQWWLNSPKEAKQFAKFLHLPFQKTLTTETQIDILKLSHESASIFHINLFNDYLALCPDLVSKNLQRERINTPGTISKKNWSYRVRPSLEELAIHKKFNGYIEKILTGL.

Belongs to the disproportionating enzyme family.

It is found in the cytoplasm. The catalysed reaction is Transfers a segment of a (1-&gt;4)-alpha-D-glucan to a new position in an acceptor, which may be glucose or a (1-&gt;4)-alpha-D-glucan.. The polypeptide is 4-alpha-glucanotransferase (malQ) (Chlamydia pneumoniae (Chlamydophila pneumoniae)).